Here is a 29-residue protein sequence, read N- to C-terminus: MDIVSLAWASLMVVFTFSLSLVVWGRSGL.

Residues 3 to 23 form a helical membrane-spanning segment; sequence IVSLAWASLMVVFTFSLSLVV.

It belongs to the PetN family. As to quaternary structure, the 4 large subunits of the cytochrome b6-f complex are cytochrome b6, subunit IV (17 kDa polypeptide, PetD), cytochrome f and the Rieske protein, while the 4 small subunits are PetG, PetL, PetM and PetN. The complex functions as a dimer.

It is found in the plastid. The protein localises to the chloroplast thylakoid membrane. Component of the cytochrome b6-f complex, which mediates electron transfer between photosystem II (PSII) and photosystem I (PSI), cyclic electron flow around PSI, and state transitions. This is Cytochrome b6-f complex subunit 8 from Coffea arabica (Arabian coffee).